We begin with the raw amino-acid sequence, 104 residues long: Cuticle protein 67, isoform B (104 aa).

7 repeat units span residues 7-10, 14-17, 21-24, 28-31, 85-88, 92-95, and 98-101.

Its function is as follows. Component of the cuticle of migratory locust which contains more than 100 different structural proteins. The chain is Cuticle protein 67, isoform B from Locusta migratoria (Migratory locust).